We begin with the raw amino-acid sequence, 226 residues long: Putative ABC transporter ATP-binding protein DR_2469 (226 aa).

Residues 2 to 225 (IELRHVSHHY…LRVYRERMTW (224 aa)) enclose the ABC transporter domain. 33–40 (GSNGSGKS) provides a ligand contact to ATP.

The protein belongs to the ABC transporter superfamily.

The protein localises to the cell membrane. In terms of biological role, probably part of an ABC transporter complex. Responsible for energy coupling to the transport system. This chain is Putative ABC transporter ATP-binding protein DR_2469, found in Deinococcus radiodurans (strain ATCC 13939 / DSM 20539 / JCM 16871 / CCUG 27074 / LMG 4051 / NBRC 15346 / NCIMB 9279 / VKM B-1422 / R1).